Consider the following 164-residue polypeptide: UPF0304 protein MS2240 (164 aa).

Belongs to the UPF0304 family.

The protein is UPF0304 protein MS2240 of Mannheimia succiniciproducens (strain KCTC 0769BP / MBEL55E).